The following is a 75-amino-acid chain: UPF0154 protein MYPU_1460 (75 aa).

Residues 8-28 (GLIVGLSILFFIIGGVVAFFV) form a helical membrane-spanning segment.

The protein belongs to the UPF0154 family.

The protein resides in the membrane. This chain is UPF0154 protein MYPU_1460, found in Mycoplasmopsis pulmonis (strain UAB CTIP) (Mycoplasma pulmonis).